We begin with the raw amino-acid sequence, 601 residues long: Probable inactive receptor kinase At1g27190 (601 aa).

The signal sequence occupies residues 1 to 24; the sequence is MKKIFITLLWLLFISSFLCSSSSA. Residue asparagine 52 is glycosylated (N-linked (GlcNAc...) asparagine). 5 LRR repeats span residues 73–95, 97–119, 122–144, 146–169, and 170–192; these read RIIS…LKLC, SLQS…ICSW, YLVT…IVEC, FLNA…SRLD, and RLRR…LARF. Residues 221 to 241 traverse the membrane as a helical segment; it reads IIIVAGVLGAVGSLCVGLVIF. Threonine 298 is modified (phosphothreonine). Residues 301–586 form the Protein kinase domain; it reads FSSGNIDVSS…KNMADKHGVS (286 aa). Residues 307 to 315 and lysine 329 contribute to the ATP site; that span reads DVSSRTGVS. Phosphoserine is present on serine 383. Position 399 is a phosphothreonine (threonine 399). Tyrosine 476 carries the post-translational modification Phosphotyrosine. Serine 478 bears the Phosphoserine mark. Phosphothreonine is present on threonine 479. 2 positions are modified to phosphoserine: serine 483 and serine 586.

The protein belongs to the protein kinase superfamily. Ser/Thr protein kinase family.

The protein resides in the membrane. The protein is Probable inactive receptor kinase At1g27190 of Arabidopsis thaliana (Mouse-ear cress).